Consider the following 189-residue polypeptide: Elongation factor P (189 aa).

Residue Lys34 is modified to N6-(3,6-diaminohexanoyl)-5-hydroxylysine.

This sequence belongs to the elongation factor P family. May be beta-lysylated on the epsilon-amino group of Lys-34 by the combined action of EpmA and EpmB, and then hydroxylated on the C5 position of the same residue by EpmC (if this protein is present). Lysylation is critical for the stimulatory effect of EF-P on peptide-bond formation. The lysylation moiety may extend toward the peptidyltransferase center and stabilize the terminal 3-CCA end of the tRNA. Hydroxylation of the C5 position on Lys-34 may allow additional potential stabilizing hydrogen-bond interactions with the P-tRNA.

Its subcellular location is the cytoplasm. It participates in protein biosynthesis; polypeptide chain elongation. In terms of biological role, involved in peptide bond synthesis. Alleviates ribosome stalling that occurs when 3 or more consecutive Pro residues or the sequence PPG is present in a protein, possibly by augmenting the peptidyl transferase activity of the ribosome. Modification of Lys-34 is required for alleviation. This Halorhodospira halophila (strain DSM 244 / SL1) (Ectothiorhodospira halophila (strain DSM 244 / SL1)) protein is Elongation factor P.